Consider the following 320-residue polypeptide: tRNA (guanine(10)-N2)-dimethyltransferase (320 aa).

The THUMP domain maps to 46–136 (EKFFERLAYT…DDKCYVGLLE (91 aa)).

The protein belongs to the methyltransferase superfamily. Trm-G10 family. As to quaternary structure, monomer.

It localises to the cytoplasm. It carries out the reaction guanosine(10) in tRNA + 2 S-adenosyl-L-methionine = N(2)-dimethylguanosine(10) in tRNA + 2 S-adenosyl-L-homocysteine + 2 H(+). Functionally, catalyzes the adenosylmethionine-dependent methylation of the exocyclic amino group (N(2)) of guanosine at position 10 of various tRNAs. Acts via a two-step process that leads to the formation of either N(2)-monomethyl (m(2)G) or N(2)-dimethylguanosine (m(2)(2)G). The sequence is that of tRNA (guanine(10)-N2)-dimethyltransferase (trmG10) from Archaeoglobus fulgidus (strain ATCC 49558 / DSM 4304 / JCM 9628 / NBRC 100126 / VC-16).